An 83-amino-acid polypeptide reads, in one-letter code: UPF0297 protein LEUM_0557 (83 aa).

The protein belongs to the UPF0297 family.

The chain is UPF0297 protein LEUM_0557 from Leuconostoc mesenteroides subsp. mesenteroides (strain ATCC 8293 / DSM 20343 / BCRC 11652 / CCM 1803 / JCM 6124 / NCDO 523 / NBRC 100496 / NCIMB 8023 / NCTC 12954 / NRRL B-1118 / 37Y).